The following is a 353-amino-acid chain: Photosystem II protein D1 (353 aa).

Thr2 carries the post-translational modification N-acetylthreonine. Thr2 is modified (phosphothreonine). The next 3 membrane-spanning stretches (helical) occupy residues 29–46, 118–133, and 142–156; these read YIGWFGVLMIPTLLTATS, HFLLGVACYMGREWEL, and WIAVAYSAPVAAATA. Chlorophyll a is bound at residue His118. A pheophytin a-binding site is contributed by Tyr126. Residues Asp170 and Glu189 each coordinate [CaMn4O5] cluster. A helical membrane pass occupies residues 197-218; sequence FHMLGVAGVFGGSLFSAMHGSL. His198 is a chlorophyll a binding site. Residues His215 and 264–265 contribute to the a quinone site; that span reads SF. His215 lines the Fe cation pocket. His272 lines the Fe cation pocket. A helical transmembrane segment spans residues 274–288; sequence FLAAWPVVGIWFTAL. His332, Glu333, Asp342, and Ala344 together coordinate [CaMn4O5] cluster. A propeptide spanning residues 345 to 353 is cleaved from the precursor; sequence AVEVPSING.

The protein belongs to the reaction center PufL/M/PsbA/D family. As to quaternary structure, PSII is composed of 1 copy each of membrane proteins PsbA, PsbB, PsbC, PsbD, PsbE, PsbF, PsbH, PsbI, PsbJ, PsbK, PsbL, PsbM, PsbT, PsbX, PsbY, PsbZ, Psb30/Ycf12, at least 3 peripheral proteins of the oxygen-evolving complex and a large number of cofactors. It forms dimeric complexes. The D1/D2 heterodimer binds P680, chlorophylls that are the primary electron donor of PSII, and subsequent electron acceptors. It shares a non-heme iron and each subunit binds pheophytin, quinone, additional chlorophylls, carotenoids and lipids. D1 provides most of the ligands for the Mn4-Ca-O5 cluster of the oxygen-evolving complex (OEC). There is also a Cl(-1) ion associated with D1 and D2, which is required for oxygen evolution. The PSII complex binds additional chlorophylls, carotenoids and specific lipids. serves as cofactor. Post-translationally, tyr-161 forms a radical intermediate that is referred to as redox-active TyrZ, YZ or Y-Z. C-terminally processed by CTPA; processing is essential to allow assembly of the oxygen-evolving complex and thus photosynthetic growth.

It is found in the plastid. Its subcellular location is the chloroplast thylakoid membrane. The enzyme catalyses 2 a plastoquinone + 4 hnu + 2 H2O = 2 a plastoquinol + O2. Its function is as follows. Photosystem II (PSII) is a light-driven water:plastoquinone oxidoreductase that uses light energy to abstract electrons from H(2)O, generating O(2) and a proton gradient subsequently used for ATP formation. It consists of a core antenna complex that captures photons, and an electron transfer chain that converts photonic excitation into a charge separation. The D1/D2 (PsbA/PsbD) reaction center heterodimer binds P680, the primary electron donor of PSII as well as several subsequent electron acceptors. The chain is Photosystem II protein D1 from Triticum aestivum (Wheat).